A 1165-amino-acid polypeptide reads, in one-letter code: Serine/threonine-protein kinase/endoribonuclease ireA (1165 aa).

The N-terminal stretch at 1–27 (MRWRLPGARTTLPASVALLLLPILVAP) is a signal peptide. Topologically, residues 28–504 (QQLQEHDDLP…STIIRKGWDN (477 aa)) are lumenal. Asparagine 152 carries N-linked (GlcNAc...) asparagine glycosylation. A helical transmembrane segment spans residues 505–525 (AVDIFVTILLLFFGAFIYFNS). The Cytoplasmic portion of the chain corresponds to 526 to 1165 (HNIQELAKQK…RFKRYFTPVE (640 aa)). Positions 547-668 (QPPLSTPSTP…SEGESKDQAD (122 aa)) are disordered. 2 stretches are compositionally biased toward basic and acidic residues: residues 591–600 (ATPKPKRDRS) and 611–620 (KIREPSRGPD). Residues 637-655 (PKKKARRGRRGGKNHRRGK) are compositionally biased toward basic residues. Basic and acidic residues predominate over residues 656 to 668 (KPDSEGESKDQAD). Residues 711-1026 (VFSDVVLGHG…ASAVLMHPFF (316 aa)) enclose the Protein kinase domain. Residues 717–725 (LGHGSHGTV) and lysine 739 contribute to the ATP site. Aspartate 832 serves as the catalytic Proton acceptor. The disordered stretch occupies residues 899–919 (AIQGGESQHTESSEPAVVDPQ). The KEN domain maps to 1029–1163 (PSDRLSFLCD…IDRFKRYFTP (135 aa)).

The protein belongs to the protein kinase superfamily. Ser/Thr protein kinase family. As to quaternary structure, homodimer; in response to the accumulation of unfolded proteins. Mg(2+) serves as cofactor. Post-translationally, autophosphorylated mainly on serine residues.

The protein localises to the membrane. The enzyme catalyses L-seryl-[protein] + ATP = O-phospho-L-seryl-[protein] + ADP + H(+). The catalysed reaction is L-threonyl-[protein] + ATP = O-phospho-L-threonyl-[protein] + ADP + H(+). 8-formyl-7-hydroxy-4-methylcoumarin inhibits the endonuclease activity and prebvent the splicing if the hacA mRNA. The kinase domain is activated by trans-autophosphorylation. Kinase activity is required for activation of the endoribonuclease domain. Its function is as follows. Senses unfolded proteins in the lumen of the endoplasmic reticulum (ER) via its N-terminal domain which leads to enzyme auto-activation. The active endoribonuclease domain responds by cleaving an intron from the downstream cytoplasmic mRNA hacA, allowing for the translation of a transcription factor that coordinates a series of adaptive responses that are collectively known as the unfolded protein response (UPR). In the absence of ER stress, ireA controls dual signaling circuits that are both hacA-dependent and hacA-independent and which contribute to the expression of traits that are essential for virulence. This is Serine/threonine-protein kinase/endoribonuclease ireA from Aspergillus fumigatus (strain ATCC MYA-4609 / CBS 101355 / FGSC A1100 / Af293) (Neosartorya fumigata).